A 287-amino-acid chain; its full sequence is Inorganic pyrophosphatase (287 aa).

Arg-79 lines the diphosphate pocket. Mg(2+)-binding residues include Asp-116, Asp-121, and Asp-153.

The protein belongs to the PPase family. It depends on Mg(2+) as a cofactor.

It localises to the cytoplasm. The enzyme catalyses diphosphate + H2O = 2 phosphate + H(+). The chain is Inorganic pyrophosphatase (IPP1) from Candida glabrata (strain ATCC 2001 / BCRC 20586 / JCM 3761 / NBRC 0622 / NRRL Y-65 / CBS 138) (Yeast).